Reading from the N-terminus, the 156-residue chain is Protein-export protein SecB (156 aa).

It belongs to the SecB family. In terms of assembly, homotetramer, a dimer of dimers. One homotetramer interacts with 1 SecA dimer.

It localises to the cytoplasm. In terms of biological role, one of the proteins required for the normal export of preproteins out of the cell cytoplasm. It is a molecular chaperone that binds to a subset of precursor proteins, maintaining them in a translocation-competent state. It also specifically binds to its receptor SecA. This chain is Protein-export protein SecB, found in Paraburkholderia xenovorans (strain LB400).